The chain runs to 236 residues: Orotidine 5'-phosphate decarboxylase (236 aa).

Substrate contacts are provided by residues D14, K36, 63–72 (DLKFHDIPNT), T123, R184, Q193, G213, and R214. The active-site Proton donor is K65.

This sequence belongs to the OMP decarboxylase family. Type 1 subfamily. In terms of assembly, homodimer.

The catalysed reaction is orotidine 5'-phosphate + H(+) = UMP + CO2. The protein operates within pyrimidine metabolism; UMP biosynthesis via de novo pathway; UMP from orotate: step 2/2. In terms of biological role, catalyzes the decarboxylation of orotidine 5'-monophosphate (OMP) to uridine 5'-monophosphate (UMP). The protein is Orotidine 5'-phosphate decarboxylase of Marinobacter nauticus (strain ATCC 700491 / DSM 11845 / VT8) (Marinobacter aquaeolei).